The primary structure comprises 239 residues: uncharacterized protein (239 aa).

The next 6 membrane-spanning stretches (helical) occupy residues 30 to 50 (VALL…IELI), 76 to 96 (LYLG…IFII), 107 to 127 (LIPI…FGYI), 157 to 177 (FIIL…FQIL), 188 to 208 (MMLS…AIIT), and 214 to 234 (LIQL…ILVL).

Belongs to the TatC family.

Its subcellular location is the plastid. The protein localises to the chloroplast membrane. This is an uncharacterized protein from Cyanidium caldarium (Red alga).